A 425-amino-acid chain; its full sequence is Histidine--tRNA ligase (425 aa).

The protein belongs to the class-II aminoacyl-tRNA synthetase family. In terms of assembly, homodimer.

Its subcellular location is the cytoplasm. The enzyme catalyses tRNA(His) + L-histidine + ATP = L-histidyl-tRNA(His) + AMP + diphosphate + H(+). This is Histidine--tRNA ligase from Listeria innocua serovar 6a (strain ATCC BAA-680 / CLIP 11262).